The following is a 730-amino-acid chain: Hepatocyte growth factor (730 aa).

The signal sequence occupies residues 1–31; the sequence is MWVTKLLPLLVLQQLLLHLLLLPVAVPRAEG. Pyrrolidone carboxylic acid is present on glutamine 32. The PAN domain occupies 37–123; the sequence is NTLHEFKKSA…HEFDLYENKD (87 aa). 8 disulfides stabilise this stretch: cysteine 70/cysteine 96, cysteine 74/cysteine 84, cysteine 128/cysteine 206, cysteine 149/cysteine 189, cysteine 177/cysteine 201, cysteine 211/cysteine 288, cysteine 232/cysteine 271, and cysteine 260/cysteine 283. Kringle domains follow at residues 128-206 and 211-288; these read CIIG…IPQC and CMTC…IKMC. N-linked (GlcNAc...) asparagine glycosylation occurs at asparagine 294. 11 disulfide bridges follow: cysteine 305–cysteine 383, cysteine 326–cysteine 365, cysteine 354–cysteine 377, cysteine 391–cysteine 469, cysteine 412–cysteine 452, cysteine 440–cysteine 464, cysteine 487–cysteine 606, cysteine 519–cysteine 535, cysteine 614–cysteine 681, cysteine 644–cysteine 660, and cysteine 671–cysteine 699. 2 Kringle domains span residues 305–383 and 391–469; these read CIQG…IPKC and CYRG…IFRC. Asparagine 402 is a glycosylation site (N-linked (GlcNAc...) asparagine). The Peptidase S1 domain maps to 495 to 723; that stretch reads VVNGIPTRTN…YAKWIHKIIL (229 aa). N-linked (GlcNAc...) asparagine glycosylation is found at asparagine 568 and asparagine 655.

Belongs to the peptidase S1 family. Plasminogen subfamily. In terms of assembly, dimer of an alpha chain and a beta chain linked by a disulfide bond. Interacts with SRPX2; the interaction increases HGF mitogenic activity. In terms of processing, the single-chain precursor undergoes proteolytic processing by TMPRSS13 resulting in an active two-chain form. The single-chain precursor undergoes proteolytic processing by HGFAC resulting in an active two-chain form.

Functionally, potent mitogen for mature parenchymal hepatocyte cells, seems to be a hepatotrophic factor, and acts as a growth factor for a broad spectrum of tissues and cell types. Activating ligand for the receptor tyrosine kinase MET by binding to it and promoting its dimerization. Activates MAPK signaling following TMPRSS13 cleavage and activation. This is Hepatocyte growth factor (HGF) from Canis lupus familiaris (Dog).